Reading from the N-terminus, the 496-residue chain is Lysine--tRNA ligase (496 aa).

Residues Glu-409 and Glu-416 each coordinate Mg(2+).

It belongs to the class-II aminoacyl-tRNA synthetase family. Homodimer. Mg(2+) serves as cofactor.

It localises to the cytoplasm. It catalyses the reaction tRNA(Lys) + L-lysine + ATP = L-lysyl-tRNA(Lys) + AMP + diphosphate. The protein is Lysine--tRNA ligase of Streptococcus pneumoniae (strain Hungary19A-6).